A 372-amino-acid polypeptide reads, in one-letter code: Bifunctional coenzyme PQQ synthesis protein C/D (372 aa).

The tract at residues 1 to 267 (MTAQFPPPVP…VAETNSAEDS (267 aa)) is pqqC. The interval 260 to 288 (ETNSAEDSPAAAASPAATTAEPTAFSGSD) is disordered. The span at 264-283 (AEDSPAAAASPAATTAEPTA) shows a compositional bias: low complexity. Residues 268-280 (PAAAASPAATTAE) form a linker region. Positions 281–372 (PTAFSGSDVP…GLAQKRVLER (92 aa)) are pqqD.

It in the N-terminal section; belongs to the PqqC family. The protein in the C-terminal section; belongs to the PqqD family. As to quaternary structure, monomer. Interacts with PqqE.

The catalysed reaction is 6-(2-amino-2-carboxyethyl)-7,8-dioxo-1,2,3,4,7,8-hexahydroquinoline-2,4-dicarboxylate + 3 O2 = pyrroloquinoline quinone + 2 H2O2 + 2 H2O + H(+). Its pathway is cofactor biosynthesis; pyrroloquinoline quinone biosynthesis. In terms of biological role, the PqqC region is involved in ring cyclization and eight-electron oxidation of 3a-(2-amino-2-carboxyethyl)-4,5-dioxo-4,5,6,7,8,9-hexahydroquinoline-7,9-dicarboxylic-acid to PQQ. Its function is as follows. The PqqD region functions as a PqqA binding domain and presents PqqA to PqqE. This is Bifunctional coenzyme PQQ synthesis protein C/D (pqqCD) from Methylorubrum extorquens (strain ATCC 14718 / DSM 1338 / JCM 2805 / NCIMB 9133 / AM1) (Methylobacterium extorquens).